Consider the following 252-residue polypeptide: Ubiquinone biosynthesis O-methyltransferase (252 aa).

The S-adenosyl-L-methionine site is built by R41, G72, D93, and M136.

This sequence belongs to the methyltransferase superfamily. UbiG/COQ3 family.

The enzyme catalyses a 3-demethylubiquinol + S-adenosyl-L-methionine = a ubiquinol + S-adenosyl-L-homocysteine + H(+). It carries out the reaction a 3-(all-trans-polyprenyl)benzene-1,2-diol + S-adenosyl-L-methionine = a 2-methoxy-6-(all-trans-polyprenyl)phenol + S-adenosyl-L-homocysteine + H(+). It functions in the pathway cofactor biosynthesis; ubiquinone biosynthesis. Functionally, O-methyltransferase that catalyzes the 2 O-methylation steps in the ubiquinone biosynthetic pathway. This chain is Ubiquinone biosynthesis O-methyltransferase, found in Rhizobium leguminosarum bv. trifolii (strain WSM2304).